A 430-amino-acid chain; its full sequence is Adenylosuccinate synthetase (430 aa).

Residues 12–18 (GDEGKGK) and 40–42 (GHT) each bind GTP. The active-site Proton acceptor is D13. Positions 13 and 40 each coordinate Mg(2+). IMP-binding positions include 13–16 (DEGK), 38–41 (NAGH), T128, R142, Q223, T238, and R302. Catalysis depends on H41, which acts as the Proton donor. Position 298 to 304 (298 to 304 (TTTGRPR)) interacts with substrate. Residues R304, 330-332 (LLD), and 412-414 (SVG) each bind GTP.

It belongs to the adenylosuccinate synthetase family. Homodimer. Mg(2+) is required as a cofactor.

Its subcellular location is the cytoplasm. It carries out the reaction IMP + L-aspartate + GTP = N(6)-(1,2-dicarboxyethyl)-AMP + GDP + phosphate + 2 H(+). It participates in purine metabolism; AMP biosynthesis via de novo pathway; AMP from IMP: step 1/2. Its function is as follows. Plays an important role in the de novo pathway of purine nucleotide biosynthesis. Catalyzes the first committed step in the biosynthesis of AMP from IMP. The protein is Adenylosuccinate synthetase of Listeria monocytogenes serotype 4a (strain HCC23).